Consider the following 760-residue polypeptide: MSNRKFGMEGFGINRQTSYSFERSQAPQRLYVPPSSRGGDNSEDADLDNIDYMENEEAEEDIEEGGSAAASGGEVDEIDPLDAFMEGIHQEMKSAPPPKPKEKLERYKDDDDDPVESYLKAKKDLGLTLAADALNAGYNSDEEVYAAAKAVDAGMLDYDSDDNPIVVDKRKIEPITALDHSSIDYEPINKDFYEELESISGMTEQETTDYRQRLGIRVSGFDVHRPVKTFEDCGFSSQIMSAIKKQAYEKPTAIQCQALPIVLSGRDVIGIAKTGSGKTAAFVLPMIVHIMDQPELQRDEGPIGVICAPTRELAHQIFLEAKKFSKAYGLRVSAVYGGMSKHEQFKELKAGCEIVVATPGRLIDMLKMKALTMMRASYLVLDEADRMFDLGFEPQVRSIVGQIRPDRQTLLFSATMPWKVEKLAREILSDPIRVTVGEVGMANEDITQVVNVIPSDAEKLPWLLEKLPGMIDEGDVLVFASKKATVDEIEAQLTLNSFKVAALHGDKDQASRMETLQKFKSGVHHVLIATDVAARGLDIKSLKTVVNYDIAKDMDMHVHRIGRTGRAGDRDGVAYTLVTQREARFAGELVNSLVAAGQNVPPELTDLAMKDGRFKSKRDGRKGGKKGRGGGGGNKGVRGVDFGLGIGFSSESSRTPSSKAAPSRSGAINSVRTGVMAQFKNSFVAATPSNPQNQAYPNKRPSLMGFVSGGTIGGDMGRTQSQAPPVAPTQNASSHNSSQNHSQSSENRPRERKRRSGWDN.

Disordered regions lie at residues 1–76 and 90–113; these read MSNR…GEVD and QEMK…DDDD. Residues 14–27 are compositionally biased toward polar residues; it reads NRQTSYSFERSQAP. Positions 41 to 64 are enriched in acidic residues; sequence NSEDADLDNIDYMENEEAEEDIEE. Over residues 99–109 the composition is skewed to basic and acidic residues; it reads KPKEKLERYKD. A Phosphoserine modification is found at Ser-160. Residues 228–256 carry the Q motif motif; the sequence is KTFEDCGFSSQIMSAIKKQAYEKPTAIQC. Residues 259–434 enclose the Helicase ATP-binding domain; sequence LPIVLSGRDV…REILSDPIRV (176 aa). 272-279 is an ATP binding site; it reads AKTGSGKT. The DEAD box motif lies at 382–385; it reads DEAD. A Helicase C-terminal domain is found at 459–608; sequence KLPWLLEKLP…NVPPELTDLA (150 aa). 3 disordered regions span residues 604–638, 647–666, and 706–760; these read LTDL…KGVR, GFSS…SRSG, and FVSG…GWDN. The segment covering 615 to 628 has biased composition (basic residues); it reads KSKRDGRKGGKKGR. Gly residues predominate over residues 629–638; that stretch reads GGGGGNKGVR. The span at 649–666 shows a compositional bias: polar residues; sequence SSESSRTPSSKAAPSRSG. Residues 707–716 show a composition bias toward gly residues; the sequence is VSGGTIGGDM. Positions 718–732 are enriched in polar residues; the sequence is RTQSQAPPVAPTQNA. Positions 733 to 745 are enriched in low complexity; that stretch reads SSHNSSQNHSQSS. Residues 750–760 are compositionally biased toward basic residues; sequence RERKRRSGWDN.

Belongs to the DEAD box helicase family.

The catalysed reaction is ATP + H2O = ADP + phosphate + H(+). This chain is DEAD-box ATP-dependent RNA helicase 24 (RH24), found in Arabidopsis thaliana (Mouse-ear cress).